The following is a 449-amino-acid chain: Procollagen C-endopeptidase enhancer 1 (449 aa).

The signal sequence occupies residues 1 to 25 (MLPAATASLLGPLLTACALLPFAQG). N29 carries N-linked (GlcNAc...) asparagine glycosylation. Disulfide bonds link C37–C63, C90–C112, C159–C186, C213–C236, C318–C386, C322–C389, and C333–C437. 2 consecutive CUB domains span residues 37-149 (CGGD…YSGR) and 159-273 (CGGR…YKTL). Position 50 is a phosphoserine (S50). The segment at 271 to 321 (KTLPRGTAKEGQGPGPKRGTEPKVKLPPKSQPPEKTEESPSAPDAPTCPKQ) is disordered. One can recognise an NTR domain in the interval 318–437 (CPKQCRRTGT…ILTNLSKRKC (120 aa)). N431 carries N-linked (GlcNAc...) asparagine glycosylation.

In terms of assembly, interacts with EFEMP2. C-terminally processed at multiple positions.

The protein localises to the secreted. Binds to the C-terminal propeptide of type I procollagen and enhances procollagen C-proteinase activity. Its function is as follows. C-terminal processed part of PCPE (CT-PCPE) may have an metalloproteinase inhibitory activity. The chain is Procollagen C-endopeptidase enhancer 1 (PCOLCE) from Homo sapiens (Human).